We begin with the raw amino-acid sequence, 38 residues long: Photosystem II reaction center protein X (38 aa).

A helical transmembrane segment spans residues 9 to 29 (ISSLTAGGLVVLTIAVALIVI).

It belongs to the PsbX family. Type 1 subfamily. PSII is composed of 1 copy each of membrane proteins PsbA, PsbB, PsbC, PsbD, PsbE, PsbF, PsbH, PsbI, PsbJ, PsbK, PsbL, PsbM, PsbT, PsbX, PsbY, PsbZ, Psb30/Ycf12, at least 3 peripheral proteins of the oxygen-evolving complex and a large number of cofactors. It forms dimeric complexes.

It is found in the plastid. Its subcellular location is the chloroplast thylakoid membrane. Functionally, involved in the binding and/or turnover of quinones at the Q(B) site of photosystem II (PSII). PSII is a light-driven water plastoquinone oxidoreductase, using light energy to abstract electrons from H(2)O, generating a proton gradient subsequently used for ATP formation. This chain is Photosystem II reaction center protein X, found in Trieres chinensis (Marine centric diatom).